A 304-amino-acid chain; its full sequence is Recombination-associated protein RdgC (304 aa).

This sequence belongs to the RdgC family.

The protein localises to the cytoplasm. It localises to the nucleoid. Functionally, may be involved in recombination. The sequence is that of Recombination-associated protein RdgC from Shewanella sp. (strain ANA-3).